We begin with the raw amino-acid sequence, 941 residues long: Cilia- and flagella-associated protein 69 (941 aa).

Over residues 1–14 (MWTEEAGATAEAQE) the composition is skewed to low complexity. The interval 1-26 (MWTEEAGATAEAQESGIRNKSSSSSQ) is disordered. The segment covering 16 to 26 (GIRNKSSSSSQ) has biased composition (polar residues).

In terms of tissue distribution, highly expressed in the testis, specifically in sperm (at protein level). Expressed in the brain, kidney, liver, lung, and intestine.

It localises to the cell projection. It is found in the cilium. The protein resides in the flagellum. In terms of biological role, cilium- and flagellum-associated protein. In the olfactory epithelium, regulates the speed of activation and termination of the odor response and thus contributes to the robustness of olfactory transduction pathways. Required for sperm flagellum assembly and stability. This chain is Cilia- and flagella-associated protein 69, found in Homo sapiens (Human).